The following is a 935-amino-acid chain: Protein HIRA (935 aa).

WD repeat units lie at residues 14-58 (HDTG…DKKK), 72-111 (ESQS…NSMG), 131-170 (GHSM…DRIT), 174-213 (DIQL…CVKS), 222-261 (IEET…QTWK), 277-320 (RAMP…KPLF), and 325-362 (IFNH…IGEM). A disordered region spans residues 431-556 (SSDIQLTKSM…RNKKRKVPAT (126 aa)). The segment covering 439–468 (SMEDNSKENESKNSEKTMMEERNKQIDVRK) has biased composition (basic and acidic residues). Residues 480-492 (GTTTADPMTSLSS) are compositionally biased toward polar residues. The span at 520–542 (DLEDSSDSDDDDEEEEEDMEISD) shows a compositional bias: acidic residues.

This sequence belongs to the WD repeat HIR1 family.

It is found in the nucleus. Functionally, required for replication-independent chromatin assembly and for the periodic repression of histone gene transcription during the cell cycle. This is Protein HIRA from Caenorhabditis elegans.